The chain runs to 96 residues: Secretoglobin family 2B member 2 (96 aa).

The first 23 residues, 1-23, serve as a signal peptide directing secretion; the sequence is MRVTSATCALLLALICSVQLGDA.

It belongs to the secretoglobin family.

The protein localises to the secreted. In Homo sapiens (Human), this protein is Secretoglobin family 2B member 2 (SCGB2B2).